Here is a 518-residue protein sequence, read N- to C-terminus: E3 ubiquitin-protein ligase TRIM39 (518 aa).

The RING-type zinc finger occupies 29 to 70 (CSVCLEYLKEPVIIECGHNFCKACITRWWEDLERDFPCPVCR). The B box-type zinc finger occupies 102-143 (RDESLCPQHHEALSLFCYEDQEAVCLICAISHTHRAHTVVPL). The Zn(2+) site is built by Cys-107, His-110, Cys-129, and His-135. Positions 181–250 (ELKRLVESRR…AHLAAEVEGK (70 aa)) form a coiled coil. 2 interaction with CDKN1A regions span residues 268–337 (KNIP…QLIA) and 389–518 (TSGR…TDWE). Residues 319 to 514 (SNFPRQYFAL…NAAPLTIRPP (196 aa)) enclose the B30.2/SPRY domain.

Belongs to the TRIM/RBCC family. In terms of assembly, isoform 1 interacts with MOAP1. Isoform 1 and isoform 2 interact with CDKN1A. Isoform 2 interacts (via domain B box-type) with CACTIN. Post-translationally, autoubiquitinated. As to expression, ubiquitous; highly expressed in brain, heart, kidney, liver, skeletal muscle, spleen and testis.

The protein resides in the cytoplasm. Its subcellular location is the cytosol. It is found in the mitochondrion. It localises to the nucleus. It carries out the reaction S-ubiquitinyl-[E2 ubiquitin-conjugating enzyme]-L-cysteine + [acceptor protein]-L-lysine = [E2 ubiquitin-conjugating enzyme]-L-cysteine + N(6)-ubiquitinyl-[acceptor protein]-L-lysine.. The protein operates within protein modification; protein ubiquitination. In terms of biological role, E3 ubiquitin-protein ligase. May facilitate apoptosis by inhibiting APC/C-Cdh1-mediated poly-ubiquitination and subsequent proteasome-mediated degradation of the pro-apoptotic protein MOAP1. Regulates the G1/S transition of the cell cycle and DNA damage-induced G2 arrest by stabilizing CDKN1A/p21. Positively regulates CDKN1A/p21 stability by competing with DTL for CDKN1A/p21 binding, therefore disrupting DCX(DTL) E3 ubiquitin ligase complex-mediated CDKN1A/p21 ubiquitination and degradation. Functionally, regulates the G1/S transition of the cell cycle and DNA damage-induced G2 arrest by stabilizing CDKN1A/p21. Positively regulates CDKN1A/p21 stability by competing with DTL for CDKN1A/p21 binding, therefore disrupting DCX(DTL) E3 ubiquitin ligase complex-mediated CDKN1A/p21 ubiquitination and degradation. Negatively regulates the canonical NF-kappa-B signaling pathway via stabilization of CACTIN in an ubiquitination-independent manner. This is E3 ubiquitin-protein ligase TRIM39 (TRIM39) from Homo sapiens (Human).